Consider the following 402-residue polypeptide: B box and SPRY domain-containing protein (402 aa).

The disordered stretch occupies residues 1–20 (MSAEGAEPGPGSGSGPGPGP). The segment at 17–65 (GPGPLCPEHGQALSWFCGSERRPVCAACAGLGGRCRGHRIRRAEERAEE) adopts a B box-type zinc-finger fold. The 191-residue stretch at 212-402 (PLLTQLWATA…VADQTISIVR (191 aa)) folds into the B30.2/SPRY domain.

In terms of assembly, interacts with TRPV5 and TRPV6. Interacts with YWHAZ/14-3-3 protein zeta.

The protein resides in the cytoplasm. It localises to the membrane. May regulate epithelial calcium transport by inhibiting TRPV5 activity. This is B box and SPRY domain-containing protein (BSPRY) from Homo sapiens (Human).